Reading from the N-terminus, the 318-residue chain is Ribose-phosphate pyrophosphokinase (318 aa).

ATP contacts are provided by residues 46–48 and 105–106; these read DGE and RQ. Residues histidine 139 and aspartate 178 each coordinate Mg(2+). Lysine 201 is an active-site residue. D-ribose 5-phosphate is bound by residues arginine 203, aspartate 227, and 231 to 235; that span reads DTAGT.

It belongs to the ribose-phosphate pyrophosphokinase family. Class I subfamily. As to quaternary structure, homohexamer. Requires Mg(2+) as cofactor.

The protein localises to the cytoplasm. It carries out the reaction D-ribose 5-phosphate + ATP = 5-phospho-alpha-D-ribose 1-diphosphate + AMP + H(+). Its pathway is metabolic intermediate biosynthesis; 5-phospho-alpha-D-ribose 1-diphosphate biosynthesis; 5-phospho-alpha-D-ribose 1-diphosphate from D-ribose 5-phosphate (route I): step 1/1. Involved in the biosynthesis of the central metabolite phospho-alpha-D-ribosyl-1-pyrophosphate (PRPP) via the transfer of pyrophosphoryl group from ATP to 1-hydroxyl of ribose-5-phosphate (Rib-5-P). The sequence is that of Ribose-phosphate pyrophosphokinase from Helicobacter pylori (strain J99 / ATCC 700824) (Campylobacter pylori J99).